Consider the following 122-residue polypeptide: Large ribosomal subunit protein eL18 (122 aa).

The protein belongs to the eukaryotic ribosomal protein eL18 family.

The sequence is that of Large ribosomal subunit protein eL18 from Thermoplasma volcanium (strain ATCC 51530 / DSM 4299 / JCM 9571 / NBRC 15438 / GSS1).